Reading from the N-terminus, the 700-residue chain is Putative cysteine-rich receptor-like protein kinase 30 (700 aa).

The first 24 residues, 1–24, serve as a signal peptide directing secretion; it reads MRQNNLFSLIFWLVPVSLIIVVSA. 2 consecutive Gnk2-homologous domains span residues 25–129 and 135–250; these read QLCS…NQPS and LESV…LYPF. Topologically, residues 25–285 are extracellular; the sequence is QLCSEKFGTF…KDEKTIHTGT (261 aa). N-linked (GlcNAc...) asparagine glycans are attached at residues Asn-63, Asn-105, Asn-146, Asn-150, and Asn-191. A helical transmembrane segment spans residues 286-306; the sequence is IIGIVIVVAMVIIMALLALGV. At 307-700 the chain is on the cytoplasmic side; sequence SVCRSRKKYQ…SKSMYRNTED (394 aa). Positions 346–626 constitute a Protein kinase domain; sequence FLASNKIGQG…IFQMLTNSSI (281 aa). ATP is bound by residues 352 to 360 and Lys-374; that span reads IGQGGFGEV. The active-site Proton acceptor is Asp-474. At Ser-478 the chain carries Phosphoserine. Phosphothreonine is present on Thr-514. Tyr-522 is subject to Phosphotyrosine.

This sequence belongs to the protein kinase superfamily. Ser/Thr protein kinase family. CRK subfamily.

The protein localises to the membrane. It carries out the reaction L-seryl-[protein] + ATP = O-phospho-L-seryl-[protein] + ADP + H(+). It catalyses the reaction L-threonyl-[protein] + ATP = O-phospho-L-threonyl-[protein] + ADP + H(+). The sequence is that of Putative cysteine-rich receptor-like protein kinase 30 (CRK30) from Arabidopsis thaliana (Mouse-ear cress).